We begin with the raw amino-acid sequence, 190 residues long: Crossover junction endodeoxyribonuclease RuvC (190 aa).

Catalysis depends on residues aspartate 7, glutamate 68, and aspartate 141. Mg(2+)-binding residues include aspartate 7, glutamate 68, and aspartate 141.

This sequence belongs to the RuvC family. As to quaternary structure, homodimer which binds Holliday junction (HJ) DNA. The HJ becomes 2-fold symmetrical on binding to RuvC with unstacked arms; it has a different conformation from HJ DNA in complex with RuvA. In the full resolvosome a probable DNA-RuvA(4)-RuvB(12)-RuvC(2) complex forms which resolves the HJ. It depends on Mg(2+) as a cofactor.

It localises to the cytoplasm. The catalysed reaction is Endonucleolytic cleavage at a junction such as a reciprocal single-stranded crossover between two homologous DNA duplexes (Holliday junction).. In terms of biological role, the RuvA-RuvB-RuvC complex processes Holliday junction (HJ) DNA during genetic recombination and DNA repair. Endonuclease that resolves HJ intermediates. Cleaves cruciform DNA by making single-stranded nicks across the HJ at symmetrical positions within the homologous arms, yielding a 5'-phosphate and a 3'-hydroxyl group; requires a central core of homology in the junction. The consensus cleavage sequence is 5'-(A/T)TT(C/G)-3'. Cleavage occurs on the 3'-side of the TT dinucleotide at the point of strand exchange. HJ branch migration catalyzed by RuvA-RuvB allows RuvC to scan DNA until it finds its consensus sequence, where it cleaves and resolves the cruciform DNA. This Endomicrobium trichonymphae protein is Crossover junction endodeoxyribonuclease RuvC.